The primary structure comprises 422 residues: Enolase (422 aa).

Serine 41 is a Mg(2+) binding site. A (2R)-2-phosphoglycerate-binding site is contributed by glutamate 163. The active-site Proton donor is glutamate 204. Residues aspartate 241, glutamate 284, and aspartate 311 each coordinate Mg(2+). Catalysis depends on lysine 336, which acts as the Proton acceptor. Arginine 365, serine 366, and lysine 387 together coordinate (2R)-2-phosphoglycerate.

Belongs to the enolase family. As to quaternary structure, homodimer. Component of the RNA degradosome, a multiprotein complex involved in RNA processing and mRNA degradation. It depends on Mg(2+) as a cofactor.

The protein localises to the cytoplasm. The protein resides in the secreted. It is found in the cell surface. It catalyses the reaction (2R)-2-phosphoglycerate = phosphoenolpyruvate + H2O. It functions in the pathway carbohydrate degradation; glycolysis; pyruvate from D-glyceraldehyde 3-phosphate: step 4/5. Its function is as follows. Catalyzes the reversible conversion of 2-phosphoglycerate (2-PG) into phosphoenolpyruvate (PEP). It is essential for the degradation of carbohydrates via glycolysis. This Legionella pneumophila subsp. pneumophila (strain Philadelphia 1 / ATCC 33152 / DSM 7513) protein is Enolase.